Reading from the N-terminus, the 225-residue chain is Cytidylate kinase (225 aa).

12-20 (GPSGAGKGT) is an ATP binding site.

It belongs to the cytidylate kinase family. Type 1 subfamily.

It localises to the cytoplasm. It catalyses the reaction CMP + ATP = CDP + ADP. The enzyme catalyses dCMP + ATP = dCDP + ADP. The polypeptide is Cytidylate kinase (Pectobacterium carotovorum subsp. carotovorum (strain PC1)).